Reading from the N-terminus, the 434-residue chain is Tryptophan synthase beta chain 2 (434 aa).

Lys-110 carries the post-translational modification N6-(pyridoxal phosphate)lysine.

Belongs to the TrpB family. As to quaternary structure, tetramer of two alpha and two beta chains. It depends on pyridoxal 5'-phosphate as a cofactor.

It carries out the reaction (1S,2R)-1-C-(indol-3-yl)glycerol 3-phosphate + L-serine = D-glyceraldehyde 3-phosphate + L-tryptophan + H2O. Its pathway is amino-acid biosynthesis; L-tryptophan biosynthesis; L-tryptophan from chorismate: step 5/5. Its function is as follows. The beta subunit is responsible for the synthesis of L-tryptophan from indole and L-serine. The chain is Tryptophan synthase beta chain 2 (trpB2) from Aquifex aeolicus (strain VF5).